Reading from the N-terminus, the 213-residue chain is Non-structural protein NP-1 (213 aa).

Residues 1-80 (MERSRSPRET…ATRKETATKK (80 aa)) form a disordered region. 2 stretches are compositionally biased toward basic and acidic residues: residues 15–33 (SRDKSDADWSERRREERTR) and 43–58 (AHGERSWGSWRSREKN).

This sequence belongs to the Bocaparvovirus Non-structural protein NP-1 family.

It localises to the host nucleus. Required for the expression of the capsid proteins. Performs the splicing and internal polyadenylation of the viral capsid-encoding mRNA precursor, which allows its maturation and expression. Transactivates the viral promoter. This chain is Non-structural protein NP-1 (NP1), found in Bos taurus (Bovine).